The chain runs to 150 residues: uncharacterized protein (150 aa).

The first 23 residues, 1–23 (MYSILIACLVLLLCLIIYVGHRA), serve as a signal peptide directing secretion.

It belongs to the asfivirus EP152R family.

It localises to the virion. This is an uncharacterized protein from African swine fever virus (isolate Tick/South Africa/Pretoriuskop Pr4/1996) (ASFV).